The primary structure comprises 538 residues: CTP synthase (538 aa).

Residues Met1–Leu265 are amidoligase domain. Ser13 contributes to the CTP binding site. Ser13 is a UTP binding site. ATP-binding positions include Ser14–Leu19 and Asp71. Positions 71 and 139 each coordinate Mg(2+). Residues Asp146 to Glu148, Lys186 to Gln191, and Lys222 contribute to the CTP site. UTP-binding positions include Lys186 to Gln191 and Lys222. The region spanning Asn291–Lys538 is the Glutamine amidotransferase type-1 domain. L-glutamine is bound at residue Gly353. Cys380 (nucleophile; for glutamine hydrolysis) is an active-site residue. Residues Tyr381 to Gln384, Glu404, and Arg468 contribute to the L-glutamine site. Catalysis depends on residues His513 and Glu515.

It belongs to the CTP synthase family. As to quaternary structure, homotetramer.

The catalysed reaction is UTP + L-glutamine + ATP + H2O = CTP + L-glutamate + ADP + phosphate + 2 H(+). It carries out the reaction L-glutamine + H2O = L-glutamate + NH4(+). The enzyme catalyses UTP + NH4(+) + ATP = CTP + ADP + phosphate + 2 H(+). Its pathway is pyrimidine metabolism; CTP biosynthesis via de novo pathway; CTP from UDP: step 2/2. Its activity is regulated as follows. Allosterically activated by GTP, when glutamine is the substrate; GTP has no effect on the reaction when ammonia is the substrate. The allosteric effector GTP functions by stabilizing the protein conformation that binds the tetrahedral intermediate(s) formed during glutamine hydrolysis. Inhibited by the product CTP, via allosteric rather than competitive inhibition. Its function is as follows. Catalyzes the ATP-dependent amination of UTP to CTP with either L-glutamine or ammonia as the source of nitrogen. Regulates intracellular CTP levels through interactions with the four ribonucleotide triphosphates. This Pelagibacter ubique (strain HTCC1062) protein is CTP synthase.